The chain runs to 208 residues: Small ribosomal subunit protein uS4 (208 aa).

The segment at 28–48 is disordered; it reads YFEKRPYPPGEHGRARRRTES. The S4 RNA-binding domain occupies 95–159; the sequence is MRLDALVLRS…ARTPFQVAAA (65 aa).

It belongs to the universal ribosomal protein uS4 family. As to quaternary structure, part of the 30S ribosomal subunit. Contacts protein S5. The interaction surface between S4 and S5 is involved in control of translational fidelity.

In terms of biological role, one of the primary rRNA binding proteins, it binds directly to 16S rRNA where it nucleates assembly of the body of the 30S subunit. Functionally, with S5 and S12 plays an important role in translational accuracy. This chain is Small ribosomal subunit protein uS4, found in Beutenbergia cavernae (strain ATCC BAA-8 / DSM 12333 / CCUG 43141 / JCM 11478 / NBRC 16432 / NCIMB 13614 / HKI 0122).